The following is a 178-amino-acid chain: Large ribosomal subunit protein uL6 (178 aa).

This sequence belongs to the universal ribosomal protein uL6 family. Part of the 50S ribosomal subunit.

This protein binds to the 23S rRNA, and is important in its secondary structure. It is located near the subunit interface in the base of the L7/L12 stalk, and near the tRNA binding site of the peptidyltransferase center. This Coxiella burnetii (strain CbuG_Q212) (Coxiella burnetii (strain Q212)) protein is Large ribosomal subunit protein uL6.